A 201-amino-acid chain; its full sequence is MSKRIAGPEIERLIQLLAKVPGLGPRSARRAALHLIKKKEQLFSPLTTAMAEALAKVRVCSVCGNVDTSDPCTICTDPRRESATLIVVEDVSDLWALERAAALNARYHVLGGTLSPLDGVGPDDLNIKGLVSRIAEGGVSEVILAVNATVEGQATAHYITDQLVGLEVRVTKLAHGVPVGGELDYLDEGTLAAALKSRTAF.

The C4-type zinc finger occupies 60-75; the sequence is CSVCGNVDTSDPCTIC. One can recognise a Toprim domain in the interval 83–178; the sequence is ATLIVVEDVS…RVTKLAHGVP (96 aa).

Belongs to the RecR family.

In terms of biological role, may play a role in DNA repair. It seems to be involved in an RecBC-independent recombinational process of DNA repair. It may act with RecF and RecO. The chain is Recombination protein RecR from Chelativorans sp. (strain BNC1).